The sequence spans 148 residues: Small ribosomal subunit protein uS13 (148 aa).

It belongs to the universal ribosomal protein uS13 family. As to quaternary structure, part of the 30S ribosomal subunit. Forms a loose heterodimer with protein S19. Forms two bridges to the 50S subunit in the 70S ribosome.

Its function is as follows. Located at the top of the head of the 30S subunit, it contacts several helices of the 16S rRNA. In the 70S ribosome it contacts the 23S rRNA (bridge B1a) and protein L5 of the 50S subunit (bridge B1b), connecting the 2 subunits; these bridges are implicated in subunit movement. The chain is Small ribosomal subunit protein uS13 from Pyrococcus horikoshii (strain ATCC 700860 / DSM 12428 / JCM 9974 / NBRC 100139 / OT-3).